Reading from the N-terminus, the 373-residue chain is NADPH-dependent 3-keto-steroid reductase Hsd3b5 (373 aa).

Residues 10–15, Y155, and K159 contribute to the NADP(+) site; that span reads GAGGFL. The active-site Proton donor is K159. The chain crosses the membrane as a helical span at residues 288 to 308; that stretch reads LSLLYWLAFLLETVSFLLRPV. At K350 the chain carries N6-acetyllysine.

Belongs to the 3-beta-HSD family. Expressed in the male liver, starting in late puberty.

The protein localises to the endoplasmic reticulum membrane. It localises to the mitochondrion membrane. The enzyme catalyses a 3beta-hydroxysteroid + NADP(+) = a 3-oxosteroid + NADPH + H(+). It catalyses the reaction 5alpha-androstane-3beta,17beta-diol + NADP(+) = 17beta-hydroxy-5alpha-androstan-3-one + NADPH + H(+). The protein operates within steroid metabolism. Responsible for the reduction of the oxo group on the C-3 of 5alpha-androstane steroids. Catalyzes the conversion of dihydrotestosterone to its inactive form 5alpha-androstanediol, that does not bind androgen receptor/AR. Does not function as an isomerase. The polypeptide is NADPH-dependent 3-keto-steroid reductase Hsd3b5 (Mus musculus (Mouse)).